We begin with the raw amino-acid sequence, 129 residues long: Small ribosomal subunit protein uS11 (129 aa).

This sequence belongs to the universal ribosomal protein uS11 family. Part of the 30S ribosomal subunit. Interacts with proteins S7 and S18. Binds to IF-3.

Its function is as follows. Located on the platform of the 30S subunit, it bridges several disparate RNA helices of the 16S rRNA. Forms part of the Shine-Dalgarno cleft in the 70S ribosome. The polypeptide is Small ribosomal subunit protein uS11 (Azotobacter vinelandii (strain DJ / ATCC BAA-1303)).